We begin with the raw amino-acid sequence, 174 residues long: Peptide methionine sulfoxide reductase MsrA (174 aa).

The active site involves C10.

It belongs to the MsrA Met sulfoxide reductase family.

The catalysed reaction is L-methionyl-[protein] + [thioredoxin]-disulfide + H2O = L-methionyl-(S)-S-oxide-[protein] + [thioredoxin]-dithiol. The enzyme catalyses [thioredoxin]-disulfide + L-methionine + H2O = L-methionine (S)-S-oxide + [thioredoxin]-dithiol. Has an important function as a repair enzyme for proteins that have been inactivated by oxidation. Catalyzes the reversible oxidation-reduction of methionine sulfoxide in proteins to methionine. The chain is Peptide methionine sulfoxide reductase MsrA from Paenarthrobacter aurescens (strain TC1).